We begin with the raw amino-acid sequence, 211 residues long: Adenylate kinase (211 aa).

ATP is bound at residue 10–15; sequence GSGKGT. The tract at residues 30–59 is NMP; that stretch reads STGDMLRAEVSKKSPLGLKAEEYMKQGLLV. Residues Thr31, Arg36, 57-59, 84-87, and Gln91 contribute to the AMP site; these read LLV and GFPR. Residues 125–162 are LID; it reads GRRVCPKCGATYNIYYQKPKNDTLCDNDATPLIQRDDD. Arg126 contacts ATP. The Zn(2+) site is built by Cys129 and Cys132. 135 to 136 contacts ATP; that stretch reads TY. Residues Cys149 and Asp152 each contribute to the Zn(2+) site. AMP is bound by residues Arg159 and Arg170. Residue Gly198 coordinates ATP.

The protein belongs to the adenylate kinase family. As to quaternary structure, monomer.

It localises to the cytoplasm. It carries out the reaction AMP + ATP = 2 ADP. It functions in the pathway purine metabolism; AMP biosynthesis via salvage pathway; AMP from ADP: step 1/1. Catalyzes the reversible transfer of the terminal phosphate group between ATP and AMP. Plays an important role in cellular energy homeostasis and in adenine nucleotide metabolism. The sequence is that of Adenylate kinase from Hydrogenobaculum sp. (strain Y04AAS1).